The sequence spans 567 residues: Glutamine-dependent NAD(+) synthetase (567 aa).

Residues 2–242 enclose the CN hydrolase domain; sequence LNLTLAQLNF…EDILTVTLDL (241 aa). Catalysis depends on Glu-41, which acts as the Proton acceptor; for glutaminase activity. The active-site For glutaminase activity is the Lys-109. Tyr-115 serves as a coordination point for L-glutamine. Cys-145 serves as the catalytic Nucleophile; for glutaminase activity. L-glutamine contacts are provided by Ser-172 and Lys-178. The tract at residues 287–567 is ligase; the sequence is PKEEEEIYAA…RMPVTNKFFK (281 aa). ATP is bound at residue 316 to 323; that stretch reads GLSGGIDS. Asn-399 lines the deamido-NAD(+) pocket. An ATP-binding site is contributed by Thr-423. Residues Glu-428 and Lys-538 each contribute to the deamido-NAD(+) site.

In the C-terminal section; belongs to the NAD synthetase family.

It catalyses the reaction deamido-NAD(+) + L-glutamine + ATP + H2O = L-glutamate + AMP + diphosphate + NAD(+) + H(+). The protein operates within cofactor biosynthesis; NAD(+) biosynthesis; NAD(+) from deamido-NAD(+) (L-Gln route): step 1/1. In terms of biological role, catalyzes the ATP-dependent amidation of deamido-NAD to form NAD. Uses L-glutamine as a nitrogen source. The polypeptide is Glutamine-dependent NAD(+) synthetase (Aquifex aeolicus (strain VF5)).